Consider the following 163-residue polypeptide: MSTETKNYITPAGWQALKDELYQLVNKERPEIVQIVNWAAGNGDRSENGDYLYGKRRMREIDRRIRFLTKRLEAAVVVDPELREATDQVFFGATVGLLRDDGREQTVKIVGIDEIDTAQNKISWISPLARCLIKAREGDEVVLNTPEGREEIEILSVEYIKID.

Residues 54 to 76 (GKRRMREIDRRIRFLTKRLEAAV) are a coiled coil.

Belongs to the GreA/GreB family. GreB subfamily.

In terms of biological role, necessary for efficient RNA polymerase transcription elongation past template-encoded arresting sites. The arresting sites in DNA have the property of trapping a certain fraction of elongating RNA polymerases that pass through, resulting in locked ternary complexes. Cleavage of the nascent transcript by cleavage factors such as GreA or GreB allows the resumption of elongation from the new 3'terminus. GreB releases sequences of up to 9 nucleotides in length. This chain is Transcription elongation factor GreB, found in Neisseria meningitidis serogroup B (strain ATCC BAA-335 / MC58).